A 323-amino-acid polypeptide reads, in one-letter code: O-phosphoserine sulfhydrylase (323 aa).

Lysine 51 is subject to N6-(pyridoxal phosphate)lysine. Pyridoxal 5'-phosphate is bound by residues asparagine 81 and 184–188 (GTTGT). A substrate-binding site is contributed by arginine 220. Serine 265 provides a ligand contact to pyridoxal 5'-phosphate.

This sequence belongs to the cysteine synthase/cystathionine beta-synthase family. In terms of assembly, homodimer. It depends on pyridoxal 5'-phosphate as a cofactor.

The enzyme catalyses [CysO sulfur-carrier protein]-C-terminal-Gly-aminoethanethioate + O-phospho-L-serine + H(+) = [CysO sulfur-carrier protein]-Gly-NH-CH2-C(O)-S-L-Cys + phosphate. It functions in the pathway amino-acid biosynthesis; L-cysteine biosynthesis. Functionally, catalyzes the formation of a covalent CysO-cysteine adduct via a sulfur transfer, using the thiocarboxylated sulfur carrier protein CysO-COSH as sulfur donor and O-phospho-L-serine (OPS) as sulfur acceptor. Can also use sodium sulfide as sulfur donor in vitro, albeit with less efficiency. This chain is O-phosphoserine sulfhydrylase (cysM), found in Mycobacterium bovis (strain ATCC BAA-935 / AF2122/97).